The following is a 608-amino-acid chain: Altered inheritance of mitochondria protein 9, mitochondrial (608 aa).

The transit peptide at 1–21 (MLRRIVNTGTKRLFRVPPRSS) directs the protein to the mitochondrion.

Belongs to the AIM9 family.

Its subcellular location is the mitochondrion. This chain is Altered inheritance of mitochondria protein 9, mitochondrial (AIM9), found in Clavispora lusitaniae (strain ATCC 42720) (Yeast).